The chain runs to 506 residues: Lysine--tRNA ligase (506 aa).

Mg(2+) is bound by residues Glu-416 and Glu-423.

This sequence belongs to the class-II aminoacyl-tRNA synthetase family. Homodimer. The cofactor is Mg(2+).

Its subcellular location is the cytoplasm. It carries out the reaction tRNA(Lys) + L-lysine + ATP = L-lysyl-tRNA(Lys) + AMP + diphosphate. The sequence is that of Lysine--tRNA ligase from Xylella fastidiosa (strain M12).